A 239-amino-acid polypeptide reads, in one-letter code: N-glycosylase/DNA lyase (239 aa).

8-oxoguanine is bound by residues Gln24, Ser51, and Trp62. The tract at residues 118–182 (ERYYEDMTLL…EDVRIIKLTR (65 aa)) is helix-hairpin-helix. The active-site Schiff-base intermediate with DNA is the Lys142. Positions 146 and 172 each coordinate 8-oxoguanine. Asp174 is an active-site residue. 2 residues coordinate 8-oxoguanine: Asp208 and Trp212.

This sequence belongs to the archaeal N-glycosylase/DNA lyase (AGOG) family.

The enzyme catalyses 2'-deoxyribonucleotide-(2'-deoxyribose 5'-phosphate)-2'-deoxyribonucleotide-DNA = a 3'-end 2'-deoxyribonucleotide-(2,3-dehydro-2,3-deoxyribose 5'-phosphate)-DNA + a 5'-end 5'-phospho-2'-deoxyribonucleoside-DNA + H(+). In terms of biological role, DNA repair enzyme that is part of the base excision repair (BER) pathway; protects from oxidative damage by removing the major product of DNA oxidation, 8-oxoguanine (GO), from single- and double-stranded DNA substrates. This Pyrococcus horikoshii (strain ATCC 700860 / DSM 12428 / JCM 9974 / NBRC 100139 / OT-3) protein is N-glycosylase/DNA lyase.